We begin with the raw amino-acid sequence, 545 residues long: CWF19-like protein 1 homolog (545 aa).

A disordered region spans residues 306–329 (YFYDMDGGRRKRQGGDNNKRDKRP).

The protein belongs to the CWF19 family.

The chain is CWF19-like protein 1 homolog from Drosophila melanogaster (Fruit fly).